The chain runs to 178 residues: UPF0232 protein cgR_0005 (178 aa).

A disordered region spans residues 16 to 55 (AMRRNGSVPDLNKNDAFRRPPAPKGGVEKRKKGRASGLDG).

This sequence belongs to the UPF0232 family.

This chain is UPF0232 protein cgR_0005, found in Corynebacterium glutamicum (strain R).